Here is a 468-residue protein sequence, read N- to C-terminus: Glutamine synthetase (468 aa).

The GS beta-grasp domain maps to 14–98; it reads HDVKYVDLRF…ILCDVYEPST (85 aa). In terms of domain architecture, GS catalytic spans 106–468; it reads PRGIAKAAEK…PIEYKMYYSV (363 aa). The Mg(2+) site is built by Glu131 and Glu133. Glu209 contributes to the ATP binding site. Glu214 and Glu221 together coordinate Mg(2+). L-glutamate contacts are provided by residues 265–266 and Gly266; that span reads NG. Residue His270 coordinates Mg(2+). Residues 272-274 and Ser274 contribute to the ATP site; that span reads HQS. Arg322, Glu328, and Arg340 together coordinate L-glutamate. ATP is bound by residues Arg340, Arg345, and Lys353. Glu358 provides a ligand contact to Mg(2+). Arg360 is a binding site for L-glutamate. Tyr398 is subject to O-AMP-tyrosine.

Belongs to the glutamine synthetase family. As to quaternary structure, oligomer of 12 subunits arranged in the form of two hexameric ring. Mg(2+) serves as cofactor.

The protein resides in the cytoplasm. The enzyme catalyses L-glutamate + NH4(+) + ATP = L-glutamine + ADP + phosphate + H(+). With respect to regulation, the activity of this enzyme could be controlled by adenylation under conditions of abundant glutamine. Functionally, catalyzes the ATP-dependent biosynthesis of glutamine from glutamate and ammonia. This chain is Glutamine synthetase, found in Azospirillum brasilense.